Consider the following 359-residue polypeptide: Biotin synthase (359 aa).

The disordered stretch occupies residues methionine 1 to serine 23. The region spanning tyrosine 76–alanine 302 is the Radical SAM core domain. Residues cysteine 94, cysteine 98, and cysteine 101 each contribute to the [4Fe-4S] cluster site. [2Fe-2S] cluster contacts are provided by cysteine 138, cysteine 170, cysteine 230, and arginine 300.

It belongs to the radical SAM superfamily. Biotin synthase family. In terms of assembly, homodimer. The cofactor is [4Fe-4S] cluster. Requires [2Fe-2S] cluster as cofactor.

The enzyme catalyses (4R,5S)-dethiobiotin + (sulfur carrier)-SH + 2 reduced [2Fe-2S]-[ferredoxin] + 2 S-adenosyl-L-methionine = (sulfur carrier)-H + biotin + 2 5'-deoxyadenosine + 2 L-methionine + 2 oxidized [2Fe-2S]-[ferredoxin]. It participates in cofactor biosynthesis; biotin biosynthesis; biotin from 7,8-diaminononanoate: step 2/2. Catalyzes the conversion of dethiobiotin (DTB) to biotin by the insertion of a sulfur atom into dethiobiotin via a radical-based mechanism. This is Biotin synthase from Rhodopirellula baltica (strain DSM 10527 / NCIMB 13988 / SH1).